Here is a 277-residue protein sequence, read N- to C-terminus: Large ribosomal subunit protein uL2 (277 aa).

A disordered region spans residues 223–277; that stretch reads VTMNPVDHPHGGGEGRTSGGRHPVTPWGKPTKGMKTRSNKATDKFIVTSRHKRKK.

Belongs to the universal ribosomal protein uL2 family. As to quaternary structure, part of the 50S ribosomal subunit. Forms a bridge to the 30S subunit in the 70S ribosome.

One of the primary rRNA binding proteins. Required for association of the 30S and 50S subunits to form the 70S ribosome, for tRNA binding and peptide bond formation. It has been suggested to have peptidyltransferase activity; this is somewhat controversial. Makes several contacts with the 16S rRNA in the 70S ribosome. The sequence is that of Large ribosomal subunit protein uL2 from Azorhizobium caulinodans (strain ATCC 43989 / DSM 5975 / JCM 20966 / LMG 6465 / NBRC 14845 / NCIMB 13405 / ORS 571).